Consider the following 232-residue polypeptide: Phosphoglycolate phosphatase (232 aa).

The Nucleophile role is filled by Asp-13. Positions 13, 15, and 175 each coordinate Mg(2+).

Belongs to the HAD-like hydrolase superfamily. CbbY/CbbZ/Gph/YieH family. Monomer. Mg(2+) serves as cofactor. It depends on chloride as a cofactor.

The enzyme catalyses 2-phosphoglycolate + H2O = glycolate + phosphate. The protein operates within organic acid metabolism; glycolate biosynthesis; glycolate from 2-phosphoglycolate: step 1/1. Functionally, specifically catalyzes the dephosphorylation of 2-phosphoglycolate. Is involved in the dissimilation of the intracellular 2-phosphoglycolate formed during the DNA repair of 3'-phosphoglycolate ends, a major class of DNA lesions induced by oxidative stress. The sequence is that of Phosphoglycolate phosphatase from Yersinia pestis.